The sequence spans 245 residues: Putative transport permease YvfS (245 aa).

6 helical membrane passes run 20-40 (YFVLWSLIMPIAFYYFFTNVV), 53-73 (HYLMSMTVFSVMGSSIMTLGI), 103-123 (IGQSVIHVLSITVIFLFGAII), 137-157 (GLWILFGALPFLALGTLIGLM), 164-184 (AGISNVLYMLLALGGGMWMPF), and 214-234 (GSPTWKNILILIAYMMLFMLL). Residues 20-242 (YFVLWSLIMP…LLSKYIRRKQ (223 aa)) enclose the ABC transmembrane type-2 domain.

The protein belongs to the ABC-2 integral membrane protein family.

Its subcellular location is the cell membrane. The sequence is that of Putative transport permease YvfS (yvfS) from Bacillus subtilis (strain 168).